The primary structure comprises 525 residues: GMP synthase [glutamine-hydrolyzing] (525 aa).

The Glutamine amidotransferase type-1 domain maps to 8 to 207; sequence KILILDFGSQ…ALEICACAAN (200 aa). Residue Cys85 is the Nucleophile of the active site. Active-site residues include His181 and Glu183. A GMPS ATP-PPase domain is found at 208–400; that stretch reads WKPASIIEDA…LGLPYNMLYR (193 aa). 235-241 contacts ATP; the sequence is SGGVDSS.

In terms of assembly, homodimer.

It catalyses the reaction XMP + L-glutamine + ATP + H2O = GMP + L-glutamate + AMP + diphosphate + 2 H(+). Its pathway is purine metabolism; GMP biosynthesis; GMP from XMP (L-Gln route): step 1/1. In terms of biological role, catalyzes the synthesis of GMP from XMP. The polypeptide is GMP synthase [glutamine-hydrolyzing] (Shewanella halifaxensis (strain HAW-EB4)).